The sequence spans 83 residues: Cytochrome b559 subunit alpha (83 aa).

The chain crosses the membrane as a helical span at residues 21–35; the sequence is IIHSITIPSLFIAGW. H23 lines the heme pocket.

As to quaternary structure, heterodimer of an alpha subunit and a beta subunit. PSII is composed of 1 copy each of membrane proteins PsbA, PsbB, PsbC, PsbD, PsbE, PsbF, PsbH, PsbI, PsbJ, PsbK, PsbL, PsbM, PsbT, PsbX, PsbY, PsbZ, Psb30/Ycf12, at least 3 peripheral proteins of the oxygen-evolving complex and a large number of cofactors. It forms dimeric complexes. Requires heme b as cofactor.

The protein resides in the plastid. It is found in the chloroplast thylakoid membrane. Its function is as follows. This b-type cytochrome is tightly associated with the reaction center of photosystem II (PSII). PSII is a light-driven water:plastoquinone oxidoreductase that uses light energy to abstract electrons from H(2)O, generating O(2) and a proton gradient subsequently used for ATP formation. It consists of a core antenna complex that captures photons, and an electron transfer chain that converts photonic excitation into a charge separation. The sequence is that of Cytochrome b559 subunit alpha from Pisum sativum (Garden pea).